Consider the following 104-residue polypeptide: Large ribosomal subunit protein bL21c (104 aa).

It belongs to the bacterial ribosomal protein bL21 family. In terms of assembly, part of the 50S ribosomal subunit.

It is found in the plastid. The protein resides in the chloroplast. Functionally, this protein binds to 23S rRNA. The polypeptide is Large ribosomal subunit protein bL21c (Porphyra purpurea (Red seaweed)).